The following is a 252-amino-acid chain: Isoprenyl transferase (252 aa).

Asp-32 is an active-site residue. Residue Asp-32 coordinates Mg(2+). Substrate contacts are provided by residues 33 to 36, Trp-37, Arg-45, His-49, and 77 to 79; these read GNGR and STE. Asn-80 functions as the Proton acceptor in the catalytic mechanism. Substrate contacts are provided by residues Trp-81, Arg-83, Arg-200, and 206–208; that span reads RLS. Glu-219 provides a ligand contact to Mg(2+).

The protein belongs to the UPP synthase family. Homodimer. The cofactor is Mg(2+).

In terms of biological role, catalyzes the condensation of isopentenyl diphosphate (IPP) with allylic pyrophosphates generating different type of terpenoids. In Listeria monocytogenes serotype 4b (strain F2365), this protein is Isoprenyl transferase.